Here is a 327-residue protein sequence, read N- to C-terminus: Zinc transport protein ZntB (327 aa).

Residues 1 to 273 are Cytoplasmic-facing; sequence MEAIKGSDVN…ARRTYTMSLM (273 aa). The helical transmembrane segment at 274–294 threads the bilayer; that stretch reads AMVFLPSTFLTGLFGVNLGGI. The Periplasmic portion of the chain corresponds to 295-300; it reads PGGGWR. A helical transmembrane segment spans residues 301-321; sequence FGFSLFCILLVVLIGGVTLWL. The Cytoplasmic portion of the chain corresponds to 322–327; that stretch reads HRSKWL.

Belongs to the CorA metal ion transporter (MIT) (TC 1.A.35) family.

The protein localises to the cell inner membrane. The catalysed reaction is Zn(2+)(out) + H(+)(out) = Zn(2+)(in) + H(+)(in). Zinc transporter. Acts as a Zn(2+):proton symporter, which likely mediates zinc ion uptake. The chain is Zinc transport protein ZntB from Salmonella enteritidis PT4 (strain P125109).